The following is a 928-amino-acid chain: Receptor-like kinase TMK4 (928 aa).

A signal peptide spans 1 to 24 (MEAPTPLLLLVLLTTITFFTTSVA). The Extracellular portion of the chain corresponds to 25–472 (DDQTAMLALA…GGSSGGGGSK (448 aa)). A disulfide bridge connects residues Cys51 and Cys58. 10 LRR repeats span residues 61–84 (GRVT…ISTL), 85–107 (SELK…FAKL), 108–130 (SSLQ…AFAG), 132–157 (TSLQ…LVDS), 158–180 (TSLT…IFDS), 181–205 (LASL…LGKS), 207–229 (IQNL…LSSM), 230–251 (TSLS…DLSK), 252–276 (SENL…LLTL), and 278–298 (SLKN…LFSP). N-linked (GlcNAc...) asparagine glycosylation is present at Asn144. Asn193 is a glycosylation site (N-linked (GlcNAc...) asparagine). The N-linked (GlcNAc...) asparagine glycan is linked to Asn281. Disulfide bonds link Cys310-Cys318 and Cys348-Cys356. 3 LRR repeats span residues 360-383 (GKNV…AIAN), 384-407 (LTSL…ELTF), and 408-435 (MTSL…VKFS). Residue Asn383 is glycosylated (N-linked (GlcNAc...) asparagine). The interval 445–465 (TNGGDGSSPGTGGASGGPGGS) is disordered. The chain crosses the membrane as a helical span at residues 473–493 (VGVIVGVIVAVLVFLAILGFV). Residues 494 to 928 (VYKFVMKRKY…PNTFDSADGR (435 aa)) lie on the Cytoplasmic side of the membrane. The Protein kinase domain maps to 578–858 (FSEDNILGRG…HAVNVLGPLV (281 aa)). ATP-binding positions include 584 to 592 (LGRGGFGVV) and Lys606. Residue Asp707 is the Proton acceptor of the active site. 2 stretches are compositionally biased toward polar residues: residues 898–911 (FHGD…QSSI) and 918–928 (FPNTFDSADGR). The segment at 898-928 (FHGDFSYSQTQSSIPPKASGFPNTFDSADGR) is disordered.

This sequence belongs to the protein kinase superfamily. Ser/Thr protein kinase family. As to quaternary structure, interacts with BAK1 (via kinase domain), SERK4 and SERK5. Expressed in roots, leaves, stems, siliques and flowers. Ubiquitous, with a high expression in mature pollen grains and in the pericycle and the xylem vasculature of the primary and lateral roots.

It is found in the membrane. It catalyses the reaction L-seryl-[protein] + ATP = O-phospho-L-seryl-[protein] + ADP + H(+). It carries out the reaction L-threonyl-[protein] + ATP = O-phospho-L-threonyl-[protein] + ADP + H(+). Involved in auxin signal transduction and cell expansion and proliferation regulation. May be involved in brassinosteroid-mediated plant growth and development via auxin regulation. May be involved in microspore and pollen development. The chain is Receptor-like kinase TMK4 from Arabidopsis thaliana (Mouse-ear cress).